Here is a 452-residue protein sequence, read N- to C-terminus: Interferon-induced protein 44-like (452 aa).

One can recognise a TLDc domain in the interval 1–159 (MEVTTRLTWN…YLECEVFRVE (159 aa)).

The protein belongs to the IFI44 family. In terms of assembly, interacts with FKBP5; this interaction modulates IKBKB and IKBKE kinase activities.

It localises to the cytoplasm. Functionally, type I interferon-stimulated gene (ISG) that plays a critical role in antiviral and antibacterial activity. During bacterial infection, promotes macrophage differentiation and facilitates inflammatory cytokine secretion. Plays a role in the control of respiratory syncytial virus/RSV infection, reducing the ability of the virus to replicate. Exhibits a low antiviral activity against hepatitis C virus. Also acts as a feedback regulator of IFN responses by negatively regulating IKBKB and IKBKE kinase activities through interaction with FKBP5. The polypeptide is Interferon-induced protein 44-like (IFI44L) (Homo sapiens (Human)).